The sequence spans 516 residues: 2-isopropylmalate synthase (516 aa).

The region spanning 10–271 (IRIFDTTLRD…TTGIDTRELA (262 aa)) is the Pyruvate carboxyltransferase domain. Positions 19, 205, 207, and 241 each coordinate Mn(2+). The regulatory domain stretch occupies residues 396 to 516 (ELVSFRVEAG…REKASNRETP (121 aa)).

This sequence belongs to the alpha-IPM synthase/homocitrate synthase family. LeuA type 1 subfamily. In terms of assembly, homodimer. Mn(2+) serves as cofactor.

It localises to the cytoplasm. It carries out the reaction 3-methyl-2-oxobutanoate + acetyl-CoA + H2O = (2S)-2-isopropylmalate + CoA + H(+). The protein operates within amino-acid biosynthesis; L-leucine biosynthesis; L-leucine from 3-methyl-2-oxobutanoate: step 1/4. Its function is as follows. Catalyzes the condensation of the acetyl group of acetyl-CoA with 3-methyl-2-oxobutanoate (2-ketoisovalerate) to form 3-carboxy-3-hydroxy-4-methylpentanoate (2-isopropylmalate). The sequence is that of 2-isopropylmalate synthase from Acidimicrobium ferrooxidans (strain DSM 10331 / JCM 15462 / NBRC 103882 / ICP).